Reading from the N-terminus, the 423-residue chain is UDP-N-acetylglucosamine 1-carboxyvinyltransferase 1 (423 aa).

Residue 23–24 coordinates phosphoenolpyruvate; sequence KN. Residue Arg96 coordinates UDP-N-acetyl-alpha-D-glucosamine. Cys120 functions as the Proton donor in the catalytic mechanism. Residue Cys120 is modified to 2-(S-cysteinyl)pyruvic acid O-phosphothioketal. UDP-N-acetyl-alpha-D-glucosamine-binding positions include 125 to 129, Asp309, and Val331; that span reads RPIDL.

This sequence belongs to the EPSP synthase family. MurA subfamily.

Its subcellular location is the cytoplasm. The enzyme catalyses phosphoenolpyruvate + UDP-N-acetyl-alpha-D-glucosamine = UDP-N-acetyl-3-O-(1-carboxyvinyl)-alpha-D-glucosamine + phosphate. The protein operates within cell wall biogenesis; peptidoglycan biosynthesis. Cell wall formation. Adds enolpyruvyl to UDP-N-acetylglucosamine. The protein is UDP-N-acetylglucosamine 1-carboxyvinyltransferase 1 of Streptococcus thermophilus (strain ATCC BAA-250 / LMG 18311).